The sequence spans 272 residues: Soluble interferon gamma receptor OPG193 (272 aa).

Positions 1-13 (MRYIIILAVLFIN) are cleaved as a signal peptide. N-linked (GlcNAc...) asparagine; by host glycosylation is found at N42, N150, and N267.

Belongs to the type II cytokine receptor family. Homodimer. Interacts with host IFNG.

It is found in the secreted. Functionally, counteracts the antiviral effects of host IFN-gamma. Acts as a soluble IFN-gamma receptor and thus inhibits the interaction between host IFN-gamma and its receptor. This Homo sapiens (Human) protein is Soluble interferon gamma receptor OPG193 (OPG193).